We begin with the raw amino-acid sequence, 97 residues long: Co-chaperonin GroES (97 aa).

Belongs to the GroES chaperonin family. Heptamer of 7 subunits arranged in a ring. Interacts with the chaperonin GroEL.

It localises to the cytoplasm. In terms of biological role, together with the chaperonin GroEL, plays an essential role in assisting protein folding. The GroEL-GroES system forms a nano-cage that allows encapsulation of the non-native substrate proteins and provides a physical environment optimized to promote and accelerate protein folding. GroES binds to the apical surface of the GroEL ring, thereby capping the opening of the GroEL channel. The polypeptide is Co-chaperonin GroES (Erwinia tasmaniensis (strain DSM 17950 / CFBP 7177 / CIP 109463 / NCPPB 4357 / Et1/99)).